The sequence spans 474 residues: tRNA-2-methylthio-N(6)-dimethylallyladenosine synthase (474 aa).

One can recognise an MTTase N-terminal domain in the interval 3 to 120 (KKLHIKTWGC…LPDMIEQVRR (118 aa)). [4Fe-4S] cluster-binding residues include cysteine 12, cysteine 49, cysteine 83, cysteine 157, cysteine 161, and cysteine 164. Residues 143–375 (RAEGPTAFVS…QDRITQQAMR (233 aa)) enclose the Radical SAM core domain. The region spanning 378-441 (RHMMGTVQRI…TNSLRGKFIR (64 aa)) is the TRAM domain.

This sequence belongs to the methylthiotransferase family. MiaB subfamily. Monomer. [4Fe-4S] cluster is required as a cofactor.

It is found in the cytoplasm. The catalysed reaction is N(6)-dimethylallyladenosine(37) in tRNA + (sulfur carrier)-SH + AH2 + 2 S-adenosyl-L-methionine = 2-methylsulfanyl-N(6)-dimethylallyladenosine(37) in tRNA + (sulfur carrier)-H + 5'-deoxyadenosine + L-methionine + A + S-adenosyl-L-homocysteine + 2 H(+). In terms of biological role, catalyzes the methylthiolation of N6-(dimethylallyl)adenosine (i(6)A), leading to the formation of 2-methylthio-N6-(dimethylallyl)adenosine (ms(2)i(6)A) at position 37 in tRNAs that read codons beginning with uridine. The protein is tRNA-2-methylthio-N(6)-dimethylallyladenosine synthase of Shewanella sp. (strain MR-7).